Consider the following 506-residue polypeptide: Nondiscriminating glutamyl-tRNA synthetase EARS2, mitochondrial (506 aa).

The transit peptide at 1–41 (MAALLRRLLQRGRPLAASGRRVGRREARLGTGPGVAVRVRF) directs the protein to the mitochondrion. 40-42 (RFA) provides a ligand contact to L-glutamate. The 'HIGH' region motif lies at 45-53 (PTGFLHLGG). His50 provides a ligand contact to ATP. Residues Glu76, 228 to 232 (YHLAC), and Arg246 contribute to the L-glutamate site. Position 249 (Glu249) interacts with ATP. At Lys256 the chain carries N6-succinyllysine. Residue 284-288 (KLSKR) coordinates ATP. Residues 284 to 288 (KLSKR) carry the 'KMSKS' region motif. N6-acetyllysine is present on Lys486.

It belongs to the class-I aminoacyl-tRNA synthetase family. Glutamate--tRNA ligase type 1 subfamily.

The protein localises to the mitochondrion matrix. It carries out the reaction tRNA(Glx) + L-glutamate + ATP = L-glutamyl-tRNA(Glx) + AMP + diphosphate. It catalyses the reaction tRNA(Glu) + L-glutamate + ATP = L-glutamyl-tRNA(Glu) + AMP + diphosphate. The catalysed reaction is tRNA(Gln) + L-glutamate + ATP = L-glutamyl-tRNA(Gln) + AMP + diphosphate. Non-discriminating glutamyl-tRNA synthetase that catalyzes aminoacylation of both mitochondrial tRNA(Glu) and tRNA(Gln) and participates in RNA aminoacylation for mitochondrial protein translation. Attachs glutamate to tRNA(Glu) or tRNA(Gln) in a two-step reaction: glutamate is first activated by ATP to form Glu-AMP and then transferred to the acceptor end of tRNA(Glu) or tRNA(Gln). In vitro, cytoplasmic tRNA(Gln) is slightly glutamylated, but with low activity. The sequence is that of Nondiscriminating glutamyl-tRNA synthetase EARS2, mitochondrial from Macaca fascicularis (Crab-eating macaque).